We begin with the raw amino-acid sequence, 202 residues long: Glycerol-3-phosphate acyltransferase (202 aa).

4 helical membrane passes run 2 to 22 (ANLLFALAAYLIGSVSFAVVV), 85 to 105 (LAMVALAVFLGHLFPVFHRFA), 119 to 139 (AINPILGLATLATWVIIAFFF), and 158 to 178 (VLMEGIDAMAGAVLIIAILLI).

The protein belongs to the PlsY family. Probably interacts with PlsX.

It localises to the cell inner membrane. The enzyme catalyses an acyl phosphate + sn-glycerol 3-phosphate = a 1-acyl-sn-glycero-3-phosphate + phosphate. Its pathway is lipid metabolism; phospholipid metabolism. Functionally, catalyzes the transfer of an acyl group from acyl-phosphate (acyl-PO(4)) to glycerol-3-phosphate (G3P) to form lysophosphatidic acid (LPA). This enzyme utilizes acyl-phosphate as fatty acyl donor, but not acyl-CoA or acyl-ACP. The polypeptide is Glycerol-3-phosphate acyltransferase (Cupriavidus pinatubonensis (strain JMP 134 / LMG 1197) (Cupriavidus necator (strain JMP 134))).